The primary structure comprises 612 residues: Glutamine--fructose-6-phosphate aminotransferase [isomerizing] (612 aa).

Cys2 serves as the catalytic Nucleophile; for GATase activity. The Glutamine amidotransferase type-2 domain maps to 2 to 219 (CGIVGANSTR…EGDIAIISKD (218 aa)). SIS domains follow at residues 287–427 (AKEL…LKNS) and 460–602 (ISEY…VDQP). The active-site For Fru-6P isomerization activity is the Lys607.

As to quaternary structure, homodimer.

The protein localises to the cytoplasm. It carries out the reaction D-fructose 6-phosphate + L-glutamine = D-glucosamine 6-phosphate + L-glutamate. Catalyzes the first step in hexosamine metabolism, converting fructose-6P into glucosamine-6P using glutamine as a nitrogen source. The protein is Glutamine--fructose-6-phosphate aminotransferase [isomerizing] of Francisella tularensis subsp. tularensis (strain SCHU S4 / Schu 4).